Reading from the N-terminus, the 569-residue chain is Urease subunit alpha (569 aa).

Residues 131–569 (GGIDAHIHWI…LPLAQRYFLF (439 aa)) enclose the Urease domain. Residues histidine 136, histidine 138, and lysine 219 each contribute to the Ni(2+) site. The residue at position 219 (lysine 219) is an N6-carboxylysine. A substrate-binding site is contributed by histidine 221. Ni(2+)-binding residues include histidine 248 and histidine 274. Catalysis depends on histidine 322, which acts as the Proton donor. Aspartate 362 contacts Ni(2+).

Belongs to the metallo-dependent hydrolases superfamily. Urease alpha subunit family. Heterotrimer of UreA (gamma), UreB (beta) and UreC (alpha) subunits. Three heterotrimers associate to form the active enzyme. Requires Ni cation as cofactor. Carboxylation allows a single lysine to coordinate two nickel ions.

It is found in the cytoplasm. It catalyses the reaction urea + 2 H2O + H(+) = hydrogencarbonate + 2 NH4(+). It functions in the pathway nitrogen metabolism; urea degradation; CO(2) and NH(3) from urea (urease route): step 1/1. The sequence is that of Urease subunit alpha from Magnetococcus marinus (strain ATCC BAA-1437 / JCM 17883 / MC-1).